The primary structure comprises 212 residues: MIIAIDGPAASGKGTLGKRLAAHYGFRHLDTGVIYRAVAKALLDGGADLTDQAQAIAAAQGLDPGLFGDPALKSQTVGDAASVISAYPKVREVLVGFQRQFAAEPPGAVLDGRDIGTVICPDADVKIFVVADPGVRARRRALEAQARGEPADEAVILADILRRDERDKGRSAAPLKQAPDAVLLDNSNLDIEGGVRAAIAIVEAVRAGRRRV.

ATP is bound at residue G7–T15.

Belongs to the cytidylate kinase family. Type 1 subfamily.

The protein localises to the cytoplasm. The catalysed reaction is CMP + ATP = CDP + ADP. It carries out the reaction dCMP + ATP = dCDP + ADP. This is Cytidylate kinase from Rhodopseudomonas palustris (strain HaA2).